The sequence spans 490 residues: Ribulose bisphosphate carboxylase large chain (490 aa).

Substrate contacts are provided by Asn-127 and Thr-177. Lys-179 (proton acceptor) is an active-site residue. Lys-181 lines the substrate pocket. Positions 205, 207, and 208 each coordinate Mg(2+). Lys-205 carries the N6-carboxylysine modification. Residue His-297 is the Proton acceptor of the active site. Substrate-binding residues include Arg-298, His-330, and Ser-382.

It belongs to the RuBisCO large chain family. Type I subfamily. Heterohexadecamer of 8 large chains and 8 small chains. Requires Mg(2+) as cofactor.

Its subcellular location is the plastid. It localises to the chloroplast. The catalysed reaction is 2 (2R)-3-phosphoglycerate + 2 H(+) = D-ribulose 1,5-bisphosphate + CO2 + H2O. It catalyses the reaction D-ribulose 1,5-bisphosphate + O2 = 2-phosphoglycolate + (2R)-3-phosphoglycerate + 2 H(+). RuBisCO catalyzes two reactions: the carboxylation of D-ribulose 1,5-bisphosphate, the primary event in carbon dioxide fixation, as well as the oxidative fragmentation of the pentose substrate in the photorespiration process. Both reactions occur simultaneously and in competition at the same active site. The sequence is that of Ribulose bisphosphate carboxylase large chain from Thalassiosira nordenskioeldii (Marine diatom).